A 696-amino-acid polypeptide reads, in one-letter code: MSQFVLEIGTEELPARFLPALERELAERFTRALADAGIECDPVRVMSTPRRAVVRMDAVNPVQSESEEVVTGPPARIAFTPEGGLTKAAEGFARTQGVEVADIFRLTTDKGEYIAVRKHMGGARSIDLLRDICPAIIGALPFPKRMRWGSGDFTYARPMRWLLALFDESVVDFEVGGVRSGNITYGHRIHGAGPLTVARAGDYERVIREQGGVTPVGEERRNAVVKGGNALAVAAGGKVIWKDSLLDEVQGLVEHPVPCLGNIDPSFLELPREVLLTSMESHQKSFGVEDAEGRLMPHFLTVLNLTPLDGDLVRKGWERVLRARLEDARFFWKTDLASSFDAWLASLDNVIFLGPLGSMGDKTRRLEQLCAWLAAEVGFDDATAAARAGRLSKGDLVSGMVGEFDTLQGIMGGIYARRMGEAEAVAAAIAEQYLPAGPDSPVPSSMCGALLSIADKADTLAGCFGLGMIPTGAADPYALRRCVLGIARIILEHGLQLDVRGLFAKAFALYGERAWKLAPEDALVKLDEFFMARLRNLFIANGYETLLVEAVLAAGCDDVRSAGARLEALAAFSRRDDFASAVLTFKRAANIIRKQGGDSDVALDGAWKADLLVEDAERQLAASLEAMFPRFDGLWAEGDYPALFGLLGELRPVVDGFFEGVMVMSDDAALRTNRLNLLQALVGRLSRLADFGALQM.

The protein belongs to the class-II aminoacyl-tRNA synthetase family. Tetramer of two alpha and two beta subunits.

The protein resides in the cytoplasm. It carries out the reaction tRNA(Gly) + glycine + ATP = glycyl-tRNA(Gly) + AMP + diphosphate. The chain is Glycine--tRNA ligase beta subunit from Nitratidesulfovibrio vulgaris (strain ATCC 29579 / DSM 644 / CCUG 34227 / NCIMB 8303 / VKM B-1760 / Hildenborough) (Desulfovibrio vulgaris).